The following is a 324-amino-acid chain: 4-hydroxy-3-methylbut-2-enyl diphosphate reductase (324 aa).

Cys13 is a [4Fe-4S] cluster binding site. The (2E)-4-hydroxy-3-methylbut-2-enyl diphosphate site is built by His41 and His75. Dimethylallyl diphosphate-binding residues include His41 and His75. Isopentenyl diphosphate-binding residues include His41 and His75. Residue Cys97 coordinates [4Fe-4S] cluster. Residue His125 participates in (2E)-4-hydroxy-3-methylbut-2-enyl diphosphate binding. His125 contacts dimethylallyl diphosphate. An isopentenyl diphosphate-binding site is contributed by His125. The active-site Proton donor is Glu127. (2E)-4-hydroxy-3-methylbut-2-enyl diphosphate is bound at residue Thr168. Cys225 is a [4Fe-4S] cluster binding site. (2E)-4-hydroxy-3-methylbut-2-enyl diphosphate contacts are provided by Ser253, Ser254, Asn255, and Ser302. 4 residues coordinate dimethylallyl diphosphate: Ser253, Ser254, Asn255, and Ser302. Residues Ser253, Ser254, Asn255, and Ser302 each coordinate isopentenyl diphosphate.

The protein belongs to the IspH family. It depends on [4Fe-4S] cluster as a cofactor.

It carries out the reaction isopentenyl diphosphate + 2 oxidized [2Fe-2S]-[ferredoxin] + H2O = (2E)-4-hydroxy-3-methylbut-2-enyl diphosphate + 2 reduced [2Fe-2S]-[ferredoxin] + 2 H(+). It catalyses the reaction dimethylallyl diphosphate + 2 oxidized [2Fe-2S]-[ferredoxin] + H2O = (2E)-4-hydroxy-3-methylbut-2-enyl diphosphate + 2 reduced [2Fe-2S]-[ferredoxin] + 2 H(+). The protein operates within isoprenoid biosynthesis; dimethylallyl diphosphate biosynthesis; dimethylallyl diphosphate from (2E)-4-hydroxy-3-methylbutenyl diphosphate: step 1/1. It functions in the pathway isoprenoid biosynthesis; isopentenyl diphosphate biosynthesis via DXP pathway; isopentenyl diphosphate from 1-deoxy-D-xylulose 5-phosphate: step 6/6. Catalyzes the conversion of 1-hydroxy-2-methyl-2-(E)-butenyl 4-diphosphate (HMBPP) into a mixture of isopentenyl diphosphate (IPP) and dimethylallyl diphosphate (DMAPP). Acts in the terminal step of the DOXP/MEP pathway for isoprenoid precursor biosynthesis. This Chlorobium limicola (strain DSM 245 / NBRC 103803 / 6330) protein is 4-hydroxy-3-methylbut-2-enyl diphosphate reductase.